A 130-amino-acid chain; its full sequence is Encapsulin nanocompartment cargo protein EncC (130 aa).

The Fe cation site is built by Glu31, Glu61, and His64. The Di-iron-binding motif motif lies at 61 to 64; sequence EREH. The segment at 103–130 is disordered; the sequence is EAVGKEGAAPSPADVTPEKRLTVGSLRR. The segment at 123 to 130 is probable targeting peptide; sequence LTVGSLRR.

Belongs to the ferritin-like superfamily.

The protein localises to the encapsulin nanocompartment. Cargo protein of a type 1 encapsulin nanocompartment. May help nucleate Fe atoms in the interior of the encapsulin nanocompartment. Present in about 92 copies/encapsulin nanocompartment. This Myxococcus xanthus (strain DK1622) protein is Encapsulin nanocompartment cargo protein EncC.